The primary structure comprises 434 residues: Enolase (434 aa).

(2R)-2-phosphoglycerate is bound at residue Gln166. The Proton donor role is filled by Glu208. Mg(2+) is bound by residues Asp245, Glu290, and Asp317. (2R)-2-phosphoglycerate-binding residues include Lys342, Arg371, Ser372, and Lys393. Residue Lys342 is the Proton acceptor of the active site.

The protein belongs to the enolase family. The cofactor is Mg(2+).

The protein localises to the cytoplasm. Its subcellular location is the secreted. It localises to the cell surface. It carries out the reaction (2R)-2-phosphoglycerate = phosphoenolpyruvate + H2O. It functions in the pathway carbohydrate degradation; glycolysis; pyruvate from D-glyceraldehyde 3-phosphate: step 4/5. Its function is as follows. Catalyzes the reversible conversion of 2-phosphoglycerate (2-PG) into phosphoenolpyruvate (PEP). It is essential for the degradation of carbohydrates via glycolysis. The protein is Enolase of Caldicellulosiruptor saccharolyticus (strain ATCC 43494 / DSM 8903 / Tp8T 6331).